The following is a 404-amino-acid chain: DNA gyrase subunit B (404 aa).

In terms of domain architecture, Toprim spans 321-404; that stretch reads SEIYIVEGDS…VIIMTDADVD (84 aa). The Mg(2+) site is built by glutamate 327, aspartate 400, and aspartate 402.

It belongs to the type II topoisomerase GyrB family. Heterotetramer, composed of two GyrA and two GyrB chains. In the heterotetramer, GyrA contains the active site tyrosine that forms a transient covalent intermediate with DNA, while GyrB binds cofactors and catalyzes ATP hydrolysis. It depends on Mg(2+) as a cofactor. Requires Mn(2+) as cofactor. Ca(2+) serves as cofactor.

It is found in the cytoplasm. The catalysed reaction is ATP-dependent breakage, passage and rejoining of double-stranded DNA.. A type II topoisomerase that negatively supercoils closed circular double-stranded (ds) DNA in an ATP-dependent manner to modulate DNA topology and maintain chromosomes in an underwound state. Negative supercoiling favors strand separation, and DNA replication, transcription, recombination and repair, all of which involve strand separation. Also able to catalyze the interconversion of other topological isomers of dsDNA rings, including catenanes and knotted rings. Type II topoisomerases break and join 2 DNA strands simultaneously in an ATP-dependent manner. This Bacillus cereus protein is DNA gyrase subunit B (gyrB).